Here is a 329-residue protein sequence, read N- to C-terminus: Glycerol-3-phosphate dehydrogenase [NAD(P)+] (329 aa).

NADPH contacts are provided by Trp11 and Lys101. Sn-glycerol 3-phosphate-binding residues include Lys101, Gly132, and Ser134. Residue Ala136 coordinates NADPH. 5 residues coordinate sn-glycerol 3-phosphate: Lys188, Asp241, Ser251, Arg252, and Asn253. Lys188 functions as the Proton acceptor in the catalytic mechanism. Arg252 is a binding site for NADPH. Residues Val276 and Glu278 each coordinate NADPH.

The protein belongs to the NAD-dependent glycerol-3-phosphate dehydrogenase family.

The protein localises to the cytoplasm. The catalysed reaction is sn-glycerol 3-phosphate + NAD(+) = dihydroxyacetone phosphate + NADH + H(+). The enzyme catalyses sn-glycerol 3-phosphate + NADP(+) = dihydroxyacetone phosphate + NADPH + H(+). Its pathway is membrane lipid metabolism; glycerophospholipid metabolism. In terms of biological role, catalyzes the reduction of the glycolytic intermediate dihydroxyacetone phosphate (DHAP) to sn-glycerol 3-phosphate (G3P), the key precursor for phospholipid synthesis. This Phytoplasma australiense protein is Glycerol-3-phosphate dehydrogenase [NAD(P)+].